A 322-amino-acid polypeptide reads, in one-letter code: tRNA uridine(34) hydroxylase (322 aa).

The Rhodanese domain occupies 125-219 (QSPDTVVIDA…YGKDPEVQGK (95 aa)). Cys-179 functions as the Cysteine persulfide intermediate in the catalytic mechanism.

This sequence belongs to the TrhO family.

It catalyses the reaction uridine(34) in tRNA + AH2 + O2 = 5-hydroxyuridine(34) in tRNA + A + H2O. Its function is as follows. Catalyzes oxygen-dependent 5-hydroxyuridine (ho5U) modification at position 34 in tRNAs. In Bacillus pumilus (strain SAFR-032), this protein is tRNA uridine(34) hydroxylase.